We begin with the raw amino-acid sequence, 141 residues long: Translation initiation factor 2 subunit beta (141 aa).

Belongs to the eIF-2-beta/eIF-5 family. As to quaternary structure, heterotrimer composed of an alpha, a beta and a gamma chain.

Its function is as follows. eIF-2 functions in the early steps of protein synthesis by forming a ternary complex with GTP and initiator tRNA. The protein is Translation initiation factor 2 subunit beta of Thermofilum pendens (strain DSM 2475 / Hrk 5).